A 391-amino-acid polypeptide reads, in one-letter code: Salivary protein TRIO (391 aa).

The first 24 residues, methionine 1–glycine 24, serve as a signal peptide directing secretion. An N-linked (GlcNAc...) asparagine glycan is attached at asparagine 323.

In terms of tissue distribution, female salivary gland (at protein level). Female saliva (at protein level). Not detected in female midgut, head and carcass (at protein level). Not detected in male tissues (at protein level).

It localises to the secreted. In terms of biological role, required for efficient probing on a mammalian host. Alters the local inflammatory response in the host skin following a mosquito bite by suppressing TNF-alpha/TNF expression. Its function is as follows. (Microbial infection) Contributes to optimal transmission of Plasmodium berghei sporozoites to mice. (Microbial infection) Contributes to optimal transmission of Plasmodium falciparum sporozoites to mammalian host. This is Salivary protein TRIO from Anopheles gambiae (African malaria mosquito).